The sequence spans 385 residues: Rhomboid domain-containing protein 3 (385 aa).

The next 5 membrane-spanning stretches (helical) occupy residues 13–33, 58–78, 93–113, 146–166, and 168–188; these read ALPLASSVLMLLLSCLWLLGA, LGHTALPGLLLSLLLLPTLGW, SAVLALATGLLAVLLAGLGLS, WLLPWLLLALTLLLSSEPPFL, and LLCGLLAGLAYAAGAFRWLEL. The UBA domain maps to 322–361; sequence SVSSLRLQQLQHMGFPTEQAAVALAATGRVEGAVSLLVEG.

The protein resides in the membrane. This chain is Rhomboid domain-containing protein 3 (Rhbdd3), found in Rattus norvegicus (Rat).